Reading from the N-terminus, the 141-residue chain is Nucleoside triphosphatase NudI (141 aa).

The Nudix hydrolase domain occupies 1 to 141 (MRQRTIVCPL…RKTLRLKGLL (141 aa)). The Nudix box signature appears at 38–59 (GGVEPGERIEEALRREIREELG).

Belongs to the Nudix hydrolase family. NudI subfamily. As to quaternary structure, monomer. Requires Mg(2+) as cofactor.

It catalyses the reaction a ribonucleoside 5'-triphosphate + H2O = a ribonucleoside 5'-phosphate + diphosphate + H(+). The enzyme catalyses a 2'-deoxyribonucleoside 5'-triphosphate + H2O = a 2'-deoxyribonucleoside 5'-phosphate + diphosphate + H(+). It carries out the reaction dUTP + H2O = dUMP + diphosphate + H(+). The catalysed reaction is dTTP + H2O = dTMP + diphosphate + H(+). It catalyses the reaction dCTP + H2O = dCMP + diphosphate + H(+). Catalyzes the hydrolysis of nucleoside triphosphates, with a preference for pyrimidine deoxynucleoside triphosphates (dUTP, dTTP and dCTP). The protein is Nucleoside triphosphatase NudI of Escherichia coli O9:H4 (strain HS).